Consider the following 393-residue polypeptide: Probable acetyl-CoA acyltransferase (393 aa).

Catalysis depends on C88, which acts as the Acyl-thioester intermediate. Active-site proton acceptor residues include H349 and C378.

It belongs to the thiolase-like superfamily. Thiolase family.

It is found in the cytoplasm. The enzyme catalyses 2 acetyl-CoA = acetoacetyl-CoA + CoA. In Staphylococcus aureus (strain MSSA476), this protein is Probable acetyl-CoA acyltransferase.